A 128-amino-acid chain; its full sequence is Gas vesicle protein O (128 aa).

The interval 1–49 is disordered; the sequence is MANTPEDTQNTQNDSQNDSQNDSQKDTSARATSARAHQQPQEQPPSPMR. Residues 7–22 are compositionally biased toward low complexity; sequence DTQNTQNDSQNDSQND. Residues 29–41 are compositionally biased toward polar residues; that stretch reads ARATSARAHQQPQ.

It belongs to the gas vesicle GvpO family.

The protein localises to the gas vesicle. A minor component of the gas vesicle. May play a role in transcription and/or RNA stability and in GV assembly. Gas vesicles are hollow, gas filled proteinaceous nanostructures found in some microorganisms. It is not clear what function gas vesicles perform in soil bacteria. The polypeptide is Gas vesicle protein O (Streptomyces sp. (strain CB03234)).